We begin with the raw amino-acid sequence, 388 residues long: Mannitol-1-phosphate 5-dehydrogenase (388 aa).

Ala5–Gly16 contributes to the NAD(+) binding site. Lys213 is an active-site residue.

The protein belongs to the mannitol dehydrogenase family. As to quaternary structure, monomer.

The enzyme catalyses D-mannitol 1-phosphate + NAD(+) = beta-D-fructose 6-phosphate + NADH + H(+). Its function is as follows. Catalyzes the NAD(H)-dependent interconversion of D-fructose 6-phosphate and D-mannitol 1-phosphate in the mannitol metabolic pathway. The sequence is that of Mannitol-1-phosphate 5-dehydrogenase (mpdA) from Aspergillus terreus (strain NIH 2624 / FGSC A1156).